The sequence spans 182 residues: ATP synthase subunit delta (182 aa).

Belongs to the ATPase delta chain family. In terms of assembly, F-type ATPases have 2 components, F(1) - the catalytic core - and F(0) - the membrane proton channel. F(1) has five subunits: alpha(3), beta(3), gamma(1), delta(1), epsilon(1). CF(0) has four main subunits: a(1), b(1), b'(1) and c(10-14). The alpha and beta chains form an alternating ring which encloses part of the gamma chain. F(1) is attached to F(0) by a central stalk formed by the gamma and epsilon chains, while a peripheral stalk is formed by the delta, b and b' chains.

Its subcellular location is the cellular thylakoid membrane. Its function is as follows. F(1)F(0) ATP synthase produces ATP from ADP in the presence of a proton or sodium gradient. F-type ATPases consist of two structural domains, F(1) containing the extramembraneous catalytic core and F(0) containing the membrane proton channel, linked together by a central stalk and a peripheral stalk. During catalysis, ATP synthesis in the catalytic domain of F(1) is coupled via a rotary mechanism of the central stalk subunits to proton translocation. This protein is part of the stalk that links CF(0) to CF(1). It either transmits conformational changes from CF(0) to CF(1) or is implicated in proton conduction. This chain is ATP synthase subunit delta, found in Synechococcus sp. (strain CC9605).